The chain runs to 421 residues: Serine--tRNA ligase (421 aa).

225-227 (TAE) serves as a coordination point for L-serine. ATP contacts are provided by residues 256–258 (RSE) and Val-272. Position 279 (Glu-279) interacts with L-serine. Residue 345 to 348 (ETHS) participates in ATP binding. Position 380 (Thr-380) interacts with L-serine.

This sequence belongs to the class-II aminoacyl-tRNA synthetase family. Type-1 seryl-tRNA synthetase subfamily. As to quaternary structure, homodimer. The tRNA molecule binds across the dimer.

It localises to the cytoplasm. It catalyses the reaction tRNA(Ser) + L-serine + ATP = L-seryl-tRNA(Ser) + AMP + diphosphate + H(+). The catalysed reaction is tRNA(Sec) + L-serine + ATP = L-seryl-tRNA(Sec) + AMP + diphosphate + H(+). Its pathway is aminoacyl-tRNA biosynthesis; selenocysteinyl-tRNA(Sec) biosynthesis; L-seryl-tRNA(Sec) from L-serine and tRNA(Sec): step 1/1. Functionally, catalyzes the attachment of serine to tRNA(Ser). Is also able to aminoacylate tRNA(Sec) with serine, to form the misacylated tRNA L-seryl-tRNA(Sec), which will be further converted into selenocysteinyl-tRNA(Sec). The sequence is that of Serine--tRNA ligase from Thermus thermophilus (strain ATCC 27634 / DSM 579 / HB8).